Here is an 866-residue protein sequence, read N- to C-terminus: Pentatricopeptide repeat-containing protein At1g15510, chloroplastic (866 aa).

The transit peptide at 1-52 (MASSAQSPHFYLNPGKSNSFQSKAYKQRNVNFYWNFGIRRLFLRKSQGLSVL) directs the protein to the chloroplast. 18 PPR repeats span residues 58 to 92 (STHF…RVAV), 93 to 123 (DEDV…ALSS), 128 to 158 (GVEL…MSER), 159 to 194 (NLFS…GVKP), 195 to 229 (DVYT…GYEL), 230 to 260 (DIDV…MPRR), 261 to 295 (DIIS…SVDP), 296 to 330 (DLMT…GFAV), 331 to 365 (DISV…DIVS), 366 to 396 (WTTM…SVKP), 397 to 431 (DEIT…RLIS), 432 to 466 (YVIV…NVIS), 467 to 493 (WTSI…MKMT), 497 to 531 (NAIT…GVGL), 532 to 561 (DDFL…SQKK), 562 to 596 (DVTS…RVRP), 597 to 631 (DEIT…GVTP), and 632 to 662 (NLKH…MPVT). The segment at 667-742 (VWGALLNACR…DAGCSWVEVK (76 aa)) is type E motif. Residues 743 to 773 (GKVHAFLSDDKYHPQTKEINTVLEGFYEKMS) form a type E(+) motif region. The tract at residues 774 to 866 (EVGLTKISES…FKDGECSCGD (93 aa)) is type DYW motif.

Belongs to the PPR family. PCMP-H subfamily.

It is found in the plastid. The protein localises to the chloroplast. Its function is as follows. Regulates the RNA editing of the chloroplast transcript accD, and is essential for the early stages of chloroplast biogenesis. Required for the RNA editing of the chloroplast transcript ndhF. The polypeptide is Pentatricopeptide repeat-containing protein At1g15510, chloroplastic (PCMP-H73) (Arabidopsis thaliana (Mouse-ear cress)).